Here is a 335-residue protein sequence, read N- to C-terminus: Pregnancy-specific beta-1-glycoprotein 11 (335 aa).

The N-terminal stretch at 1–34 (MGPLSAPPCTEHIKWKGLLLTALLLNFWNLPTTA) is a signal peptide. Residues 35 to 144 (QVMIEAQPPK…TGYFTFTLYL (110 aa)) form the Ig-like V-type domain. Asn61, Asn104, and Asn111 each carry an N-linked (GlcNAc...) asparagine glycan. Positions 127-129 (RGD) match the Cell attachment site motif. 2 consecutive Ig-like C2-type domains span residues 147 to 234 (PKPS…VTLN) and 242 to 317 (PRIF…TSLT). Cystine bridges form between Cys169–Cys217 and Cys261–Cys301.

It belongs to the immunoglobulin superfamily. CEA family.

Its subcellular location is the secreted. The sequence is that of Pregnancy-specific beta-1-glycoprotein 11 (PSG11) from Homo sapiens (Human).